The primary structure comprises 205 residues: Small ribosomal subunit protein uS4 (205 aa).

Residues 1–12 (MSKRIQAKHKLD) are compositionally biased toward basic residues. Residues 1 to 49 (MSKRIQAKHKLDRRMGQNIWGRPKSPVNRREYGPGQHGQRRKGKMSDFG) are disordered. The 62-residue stretch at 94 to 155 (RRLDAVVYRA…SSRQLEIVIV (62 aa)) folds into the S4 RNA-binding domain.

The protein belongs to the universal ribosomal protein uS4 family. As to quaternary structure, part of the 30S ribosomal subunit. Contacts protein S5. The interaction surface between S4 and S5 is involved in control of translational fidelity.

One of the primary rRNA binding proteins, it binds directly to 16S rRNA where it nucleates assembly of the body of the 30S subunit. Functionally, with S5 and S12 plays an important role in translational accuracy. The polypeptide is Small ribosomal subunit protein uS4 (Methylobacterium radiotolerans (strain ATCC 27329 / DSM 1819 / JCM 2831 / NBRC 15690 / NCIMB 10815 / 0-1)).